Reading from the N-terminus, the 347-residue chain is NADH-ubiquinone oxidoreductase chain 2 (347 aa).

A run of 10 helical transmembrane segments spans residues 3-23, 25-45, 59-79, 89-109, 149-169, 178-198, 200-220, 237-257, 274-294, and 325-345; these read PIIYTTLIMTVMSGTMLVMIS, HWLLIWIGFEMNLLAMIPVLM, YFLTQATASMMLMMAIIINLL, MFNPVAMTMMTMALAMKLGLS, INPNLMLTMAMLSILIGGWGG, IMAYSSIAHMGWMTAVLPYNT, MTILNLLIYITMTLAMFMLLI, MPVITSLMMVTLLSMGGLPPL, ESIIMPTLMAMTALLNLYFYM, and LLPTMIVLSTLVLPMTPALSS.

Belongs to the complex I subunit 2 family. Core subunit of respiratory chain NADH dehydrogenase (Complex I) which is composed of 45 different subunits. Interacts with TMEM242.

The protein resides in the mitochondrion inner membrane. It carries out the reaction a ubiquinone + NADH + 5 H(+)(in) = a ubiquinol + NAD(+) + 4 H(+)(out). In terms of biological role, core subunit of the mitochondrial membrane respiratory chain NADH dehydrogenase (Complex I) which catalyzes electron transfer from NADH through the respiratory chain, using ubiquinone as an electron acceptor. Essential for the catalytic activity and assembly of complex I. This is NADH-ubiquinone oxidoreductase chain 2 from Sus scrofa (Pig).